Here is a 711-residue protein sequence, read N- to C-terminus: Ribosomal RNA large subunit methyltransferase K/L (711 aa).

One can recognise a THUMP domain in the interval 42-153 (DAQRAVLWSR…KGRATISVDL (112 aa)).

This sequence belongs to the methyltransferase superfamily. RlmKL family.

It localises to the cytoplasm. The enzyme catalyses guanosine(2445) in 23S rRNA + S-adenosyl-L-methionine = N(2)-methylguanosine(2445) in 23S rRNA + S-adenosyl-L-homocysteine + H(+). It catalyses the reaction guanosine(2069) in 23S rRNA + S-adenosyl-L-methionine = N(2)-methylguanosine(2069) in 23S rRNA + S-adenosyl-L-homocysteine + H(+). Functionally, specifically methylates the guanine in position 2445 (m2G2445) and the guanine in position 2069 (m7G2069) of 23S rRNA. In Xanthomonas campestris pv. campestris (strain 8004), this protein is Ribosomal RNA large subunit methyltransferase K/L.